A 241-amino-acid polypeptide reads, in one-letter code: Probable transcriptional regulatory protein RALTA_A0859 (241 aa).

This sequence belongs to the TACO1 family.

Its subcellular location is the cytoplasm. The chain is Probable transcriptional regulatory protein RALTA_A0859 from Cupriavidus taiwanensis (strain DSM 17343 / BCRC 17206 / CCUG 44338 / CIP 107171 / LMG 19424 / R1) (Ralstonia taiwanensis (strain LMG 19424)).